A 505-amino-acid chain; its full sequence is Maturase K (505 aa).

It belongs to the intron maturase 2 family. MatK subfamily.

Its subcellular location is the plastid. The protein localises to the chloroplast. Its function is as follows. Usually encoded in the trnK tRNA gene intron. Probably assists in splicing its own and other chloroplast group II introns. The polypeptide is Maturase K (Elaeagnus umbellata (Autumn olive)).